Reading from the N-terminus, the 142-residue chain is uncharacterized protein (142 aa).

Positions 18 to 137 constitute a Peptidase C39 domain; the sequence is QSRSYSCGPA…RIFTGNVLVV (120 aa).

This is an uncharacterized protein from Methanothermobacter thermautotrophicus (strain ATCC 29096 / DSM 1053 / JCM 10044 / NBRC 100330 / Delta H) (Methanobacterium thermoautotrophicum).